A 599-amino-acid chain; its full sequence is Sulfite reductase [NADPH] flavoprotein alpha-component (599 aa).

Residues 64 to 202 (ITLISASQTG…AAAEWRARVV (139 aa)) form the Flavodoxin-like domain. FMN is bound by residues 70–75 (SQTGNA), 117–120 (STQG), and 153–162 (LGDTSYEFFC). The region spanning 234–448 (EAPLTATLSV…IEHNDNFRLP (215 aa)) is the FAD-binding FR-type domain. Residues T322, A356, 386 to 389 (RLYS), 404 to 406 (TVG), Y410, and 419 to 422 (GGAS) each bind FAD. Residues 519–520 (SR), 525–529 (KIYVQ), and D561 contribute to the NADP(+) site. Residue Y599 participates in FAD binding.

It belongs to the NADPH-dependent sulphite reductase flavoprotein subunit CysJ family. The protein in the N-terminal section; belongs to the flavodoxin family. This sequence in the C-terminal section; belongs to the flavoprotein pyridine nucleotide cytochrome reductase family. Alpha(8)-beta(8). The alpha component is a flavoprotein, the beta component is a hemoprotein. FAD is required as a cofactor. The cofactor is FMN.

The catalysed reaction is hydrogen sulfide + 3 NADP(+) + 3 H2O = sulfite + 3 NADPH + 4 H(+). It participates in sulfur metabolism; hydrogen sulfide biosynthesis; hydrogen sulfide from sulfite (NADPH route): step 1/1. In terms of biological role, component of the sulfite reductase complex that catalyzes the 6-electron reduction of sulfite to sulfide. This is one of several activities required for the biosynthesis of L-cysteine from sulfate. The flavoprotein component catalyzes the electron flow from NADPH -&gt; FAD -&gt; FMN to the hemoprotein component. This Klebsiella pneumoniae subsp. pneumoniae (strain ATCC 700721 / MGH 78578) protein is Sulfite reductase [NADPH] flavoprotein alpha-component.